The chain runs to 267 residues: uncharacterized protein (267 aa).

One copy of the WD repeat lies at 50 to 90 (PGLNAVTASKFSPDGRWLLNIADGSGYVQLWDTAKGERVKT).

This is an uncharacterized protein from Deinococcus radiodurans (strain ATCC 13939 / DSM 20539 / JCM 16871 / CCUG 27074 / LMG 4051 / NBRC 15346 / NCIMB 9279 / VKM B-1422 / R1).